Here is a 299-residue protein sequence, read N- to C-terminus: Oxygen-dependent coproporphyrinogen-III oxidase (299 aa).

Serine 92 serves as a coordination point for substrate. Residues histidine 96 and histidine 106 each contribute to the a divalent metal cation site. The active-site Proton donor is the histidine 106. A substrate-binding site is contributed by asparagine 108 to arginine 110. A divalent metal cation-binding residues include histidine 145 and histidine 175. The segment at tyrosine 240–glutamate 275 is important for dimerization. Glycine 258 to arginine 260 contributes to the substrate binding site.

This sequence belongs to the aerobic coproporphyrinogen-III oxidase family. Homodimer. The cofactor is a divalent metal cation.

The protein resides in the cytoplasm. The catalysed reaction is coproporphyrinogen III + O2 + 2 H(+) = protoporphyrinogen IX + 2 CO2 + 2 H2O. Its pathway is porphyrin-containing compound metabolism; protoporphyrin-IX biosynthesis; protoporphyrinogen-IX from coproporphyrinogen-III (O2 route): step 1/1. Its function is as follows. Involved in the heme biosynthesis. Catalyzes the aerobic oxidative decarboxylation of propionate groups of rings A and B of coproporphyrinogen-III to yield the vinyl groups in protoporphyrinogen-IX. The polypeptide is Oxygen-dependent coproporphyrinogen-III oxidase (Salmonella arizonae (strain ATCC BAA-731 / CDC346-86 / RSK2980)).